The chain runs to 417 residues: Tyrosine--tRNA ligase (417 aa).

Position 39 (tyrosine 39) interacts with L-tyrosine. The 'HIGH' region signature appears at cysteine 44 to asparagine 53. L-tyrosine contacts are provided by tyrosine 176 and glutamine 180. The 'KMSKS' region signature appears at lysine 236–threonine 240. An ATP-binding site is contributed by lysine 239. One can recognise an S4 RNA-binding domain in the interval phenylalanine 350–alanine 417.

This sequence belongs to the class-I aminoacyl-tRNA synthetase family. TyrS type 1 subfamily. As to quaternary structure, homodimer.

It localises to the cytoplasm. The enzyme catalyses tRNA(Tyr) + L-tyrosine + ATP = L-tyrosyl-tRNA(Tyr) + AMP + diphosphate + H(+). Catalyzes the attachment of tyrosine to tRNA(Tyr) in a two-step reaction: tyrosine is first activated by ATP to form Tyr-AMP and then transferred to the acceptor end of tRNA(Tyr). The chain is Tyrosine--tRNA ligase from Bradyrhizobium diazoefficiens (strain JCM 10833 / BCRC 13528 / IAM 13628 / NBRC 14792 / USDA 110).